The sequence spans 175 residues: UPF0178 protein GOX1710 (175 aa).

This sequence belongs to the UPF0178 family.

In Gluconobacter oxydans (strain 621H) (Gluconobacter suboxydans), this protein is UPF0178 protein GOX1710.